A 63-amino-acid chain; its full sequence is Prokaryotic ubiquitin-like protein Pup (63 aa).

Residues methionine 1–valine 28 are disordered. An ARC ATPase binding region spans residues aspartate 19–tyrosine 57. Residue glutamate 63 forms an Isoglutamyl lysine isopeptide (Glu-Lys) (interchain with K-? in acceptor proteins) linkage.

Belongs to the prokaryotic ubiquitin-like protein family. Strongly interacts with the proteasome-associated ATPase ARC through a hydrophobic interface; the interacting region of Pup lies in its C-terminal half. There is one Pup binding site per ARC hexamer ring.

The protein operates within protein degradation; proteasomal Pup-dependent pathway. In terms of biological role, protein modifier that is covalently attached to lysine residues of substrate proteins, thereby targeting them for proteasomal degradation. The tagging system is termed pupylation. The chain is Prokaryotic ubiquitin-like protein Pup from Corynebacterium efficiens (strain DSM 44549 / YS-314 / AJ 12310 / JCM 11189 / NBRC 100395).